A 113-amino-acid chain; its full sequence is Hydrogenase maturation factor HypA (113 aa).

A Ni(2+)-binding site is contributed by histidine 2. Zn(2+) is bound by residues cysteine 73, cysteine 76, cysteine 89, and cysteine 92.

Belongs to the HypA/HybF family.

Involved in the maturation of [NiFe] hydrogenases. Required for nickel insertion into the metal center of the hydrogenase. In Dechloromonas aromatica (strain RCB), this protein is Hydrogenase maturation factor HypA.